The sequence spans 447 residues: Cysteine--tRNA ligase (447 aa).

Cys-28 is a Zn(2+) binding site. Positions 30–40 (PTVYNYIHIGN) match the 'HIGH' region motif. Residues Cys-211, His-236, and Glu-240 each coordinate Zn(2+). The 'KMSKS' region motif lies at 268-272 (KMSKS). Lys-271 is an ATP binding site.

The protein belongs to the class-I aminoacyl-tRNA synthetase family. As to quaternary structure, monomer. Zn(2+) serves as cofactor.

The protein resides in the cytoplasm. The catalysed reaction is tRNA(Cys) + L-cysteine + ATP = L-cysteinyl-tRNA(Cys) + AMP + diphosphate. The protein is Cysteine--tRNA ligase of Streptococcus agalactiae serotype III (strain NEM316).